The sequence spans 155 residues: 6,7-dimethyl-8-ribityllumazine synthase (155 aa).

5-amino-6-(D-ribitylamino)uracil-binding positions include Phe22, 57–59 (AYE), and 81–83 (SVI). 86–87 (GT) is a (2S)-2-hydroxy-3-oxobutyl phosphate binding site. His88 acts as the Proton donor in catalysis. Phe113 lines the 5-amino-6-(D-ribitylamino)uracil pocket. Arg127 lines the (2S)-2-hydroxy-3-oxobutyl phosphate pocket.

Belongs to the DMRL synthase family. Forms an icosahedral capsid composed of 60 subunits, arranged as a dodecamer of pentamers.

The catalysed reaction is (2S)-2-hydroxy-3-oxobutyl phosphate + 5-amino-6-(D-ribitylamino)uracil = 6,7-dimethyl-8-(1-D-ribityl)lumazine + phosphate + 2 H2O + H(+). The protein operates within cofactor biosynthesis; riboflavin biosynthesis; riboflavin from 2-hydroxy-3-oxobutyl phosphate and 5-amino-6-(D-ribitylamino)uracil: step 1/2. Catalyzes the formation of 6,7-dimethyl-8-ribityllumazine by condensation of 5-amino-6-(D-ribitylamino)uracil with 3,4-dihydroxy-2-butanone 4-phosphate. This is the penultimate step in the biosynthesis of riboflavin. This Photobacterium phosphoreum protein is 6,7-dimethyl-8-ribityllumazine synthase.